The primary structure comprises 347 residues: L-threonine 3-dehydrogenase (347 aa).

A Zn(2+)-binding site is contributed by C43. Catalysis depends on charge relay system residues T45 and H48. Zn(2+) is bound by residues H68, E69, C98, C101, C104, and C112. NAD(+)-binding positions include I180, D200, R205, 267–269 (LSL), and 292–293 (IT).

This sequence belongs to the zinc-containing alcohol dehydrogenase family. Homotetramer. Requires Zn(2+) as cofactor.

It is found in the cytoplasm. The enzyme catalyses L-threonine + NAD(+) = (2S)-2-amino-3-oxobutanoate + NADH + H(+). It participates in amino-acid degradation; L-threonine degradation via oxydo-reductase pathway; glycine from L-threonine: step 1/2. Its function is as follows. Catalyzes the NAD(+)-dependent oxidation of L-threonine to 2-amino-3-ketobutyrate. This is L-threonine 3-dehydrogenase from Bacillus subtilis (strain 168).